The sequence spans 98 residues: Cell division protein FtsB (98 aa).

Topologically, residues 1–3 are cytoplasmic; the sequence is MKR. Residues 4-21 traverse the membrane as a helical segment; that stretch reads LLFVLIALLAMLQYRLWL. The Periplasmic portion of the chain corresponds to 22–98; it reads GDKSLADSFH…GGERGGVPEN (77 aa). A coiled-coil region spans residues 31-74; it reads HLQEQIKLQQQSNAQLVARNQVLREEISDLRSGTEALEERARNE.

The protein belongs to the FtsB family. As to quaternary structure, part of a complex composed of FtsB, FtsL and FtsQ.

It is found in the cell inner membrane. Functionally, essential cell division protein. May link together the upstream cell division proteins, which are predominantly cytoplasmic, with the downstream cell division proteins, which are predominantly periplasmic. In Shewanella pealeana (strain ATCC 700345 / ANG-SQ1), this protein is Cell division protein FtsB.